The chain runs to 205 residues: Protein N-terminal glutamine amidohydrolase (205 aa).

Residues C20, H74, and D90 contribute to the active site.

This sequence belongs to the NTAQ1 family. Monomer.

It catalyses the reaction N-terminal L-glutaminyl-[protein] + H2O = N-terminal L-glutamyl-[protein] + NH4(+). Its function is as follows. Mediates the side-chain deamidation of N-terminal glutamine residues to glutamate, an important step in N-end rule pathway of protein degradation. Conversion of the resulting N-terminal glutamine to glutamate renders the protein susceptible to arginylation, polyubiquitination and degradation as specified by the N-end rule. Does not act on substrates with internal or C-terminal glutamine and does not act on non-glutamine residues in any position. This is Protein N-terminal glutamine amidohydrolase (tun) from Drosophila grimshawi (Hawaiian fruit fly).